Consider the following 368-residue polypeptide: tRNA/tmRNA (uracil-C(5))-methyltransferase (368 aa).

Residues glutamine 192, tyrosine 220, asparagine 225, glutamate 241, and aspartate 301 each coordinate S-adenosyl-L-methionine. Catalysis depends on cysteine 326, which acts as the Nucleophile. The Proton acceptor role is filled by glutamate 360.

This sequence belongs to the class I-like SAM-binding methyltransferase superfamily. RNA M5U methyltransferase family. TrmA subfamily.

It catalyses the reaction uridine(54) in tRNA + S-adenosyl-L-methionine = 5-methyluridine(54) in tRNA + S-adenosyl-L-homocysteine + H(+). The enzyme catalyses uridine(341) in tmRNA + S-adenosyl-L-methionine = 5-methyluridine(341) in tmRNA + S-adenosyl-L-homocysteine + H(+). Functionally, dual-specificity methyltransferase that catalyzes the formation of 5-methyluridine at position 54 (m5U54) in all tRNAs, and that of position 341 (m5U341) in tmRNA (transfer-mRNA). The protein is tRNA/tmRNA (uracil-C(5))-methyltransferase of Actinobacillus pleuropneumoniae serotype 3 (strain JL03).